A 311-amino-acid chain; its full sequence is HPr kinase/phosphorylase (311 aa).

Catalysis depends on residues His-139 and Lys-160. 154–161 provides a ligand contact to ATP; the sequence is GQSGVGKS. Ser-161 serves as a coordination point for Mg(2+). Catalysis depends on Asp-178, which acts as the Proton acceptor; for phosphorylation activity. Proton donor; for dephosphorylation activity. An important for the catalytic mechanism of both phosphorylation and dephosphorylation region spans residues 202–211; the sequence is LEIRGIGIID. Position 203 (Glu-203) interacts with Mg(2+). Arg-244 is an active-site residue. The interval 265-270 is important for the catalytic mechanism of dephosphorylation; sequence PVRPGR.

This sequence belongs to the HPrK/P family. Homohexamer. Requires Mg(2+) as cofactor.

The enzyme catalyses [HPr protein]-L-serine + ATP = [HPr protein]-O-phospho-L-serine + ADP + H(+). The catalysed reaction is [HPr protein]-O-phospho-L-serine + phosphate + H(+) = [HPr protein]-L-serine + diphosphate. Its function is as follows. Catalyzes the ATP- as well as the pyrophosphate-dependent phosphorylation of a specific serine residue in HPr, a phosphocarrier protein of the phosphoenolpyruvate-dependent sugar phosphotransferase system (PTS). HprK/P also catalyzes the pyrophosphate-producing, inorganic phosphate-dependent dephosphorylation (phosphorolysis) of seryl-phosphorylated HPr (P-Ser-HPr). The two antagonistic activities of HprK/P are regulated by several intracellular metabolites, which change their concentration in response to the absence or presence of rapidly metabolisable carbon sources (glucose, fructose, etc.) in the growth medium. Therefore, by controlling the phosphorylation state of HPr, HPrK/P is a sensor enzyme that plays a major role in the regulation of carbon metabolism and sugar transport: it mediates carbon catabolite repression (CCR), and regulates PTS-catalyzed carbohydrate uptake and inducer exclusion. In Exiguobacterium sp. (strain ATCC BAA-1283 / AT1b), this protein is HPr kinase/phosphorylase.